The chain runs to 392 residues: 8-amino-7-oxononanoate synthase (392 aa).

Arg-21 is a substrate binding site. Pyridoxal 5'-phosphate is bound at residue 114–115 (GY). His-139 is a substrate binding site. Residues Ser-187, 212–215 (DEAH), and 243–246 (TFGK) contribute to the pyridoxal 5'-phosphate site. Lys-246 carries the post-translational modification N6-(pyridoxal phosphate)lysine. Thr-359 lines the substrate pocket.

It belongs to the class-II pyridoxal-phosphate-dependent aminotransferase family. BioF subfamily. As to quaternary structure, homodimer. Pyridoxal 5'-phosphate serves as cofactor.

It carries out the reaction 6-carboxyhexanoyl-[ACP] + L-alanine + H(+) = (8S)-8-amino-7-oxononanoate + holo-[ACP] + CO2. Its pathway is cofactor biosynthesis; biotin biosynthesis. Its function is as follows. Catalyzes the decarboxylative condensation of pimeloyl-[acyl-carrier protein] and L-alanine to produce 8-amino-7-oxononanoate (AON), [acyl-carrier protein], and carbon dioxide. The polypeptide is 8-amino-7-oxononanoate synthase (Chlorobaculum parvum (strain DSM 263 / NCIMB 8327) (Chlorobium vibrioforme subsp. thiosulfatophilum)).